The following is a 379-amino-acid chain: Cytochrome b (379 aa).

4 helical membrane-spanning segments follow: residues phenylalanine 33–methionine 53, tryptophan 77–valine 98, tryptophan 113–leucine 133, and phenylalanine 178–leucine 198. 2 residues coordinate heme b: histidine 83 and histidine 97. Heme b-binding residues include histidine 182 and histidine 196. Histidine 201 serves as a coordination point for a ubiquinone. 4 helical membrane passes run threonine 226–phenylalanine 246, leucine 288–asparagine 308, isoleucine 320–glycine 340, and residue 347–proline 367.

Belongs to the cytochrome b family. In terms of assembly, the cytochrome bc1 complex contains 11 subunits: 3 respiratory subunits (MT-CYB, CYC1 and UQCRFS1), 2 core proteins (UQCRC1 and UQCRC2) and 6 low-molecular weight proteins (UQCRH/QCR6, UQCRB/QCR7, UQCRQ/QCR8, UQCR10/QCR9, UQCR11/QCR10 and a cleavage product of UQCRFS1). This cytochrome bc1 complex then forms a dimer. Requires heme b as cofactor.

It localises to the mitochondrion inner membrane. Its function is as follows. Component of the ubiquinol-cytochrome c reductase complex (complex III or cytochrome b-c1 complex) that is part of the mitochondrial respiratory chain. The b-c1 complex mediates electron transfer from ubiquinol to cytochrome c. Contributes to the generation of a proton gradient across the mitochondrial membrane that is then used for ATP synthesis. The protein is Cytochrome b (MT-CYB) of Akodon boliviensis (Bolivian grass mouse).